Reading from the N-terminus, the 779-residue chain is ATP-dependent RNA helicase SUPV3L1, mitochondrial (779 aa).

The transit peptide at 1–40 directs the protein to the mitochondrion; the sequence is MSLPRCTLLWARLPAGRGAGPRAAPCSALRALVGSFPGAS. Position 99 is an N6-acetyllysine (Lys99). The region spanning 194-334 is the Helicase ATP-binding domain; the sequence is EARARQRKII…AINLVSELLY (141 aa). 207–214 provides a ligand contact to ATP; that stretch reads GPTNSGKT. In terms of domain architecture, Helicase C-terminal spans 353–521; that stretch reads VLDHALESLD…PTAEQIEMFA (169 aa). The interaction with LAMTOR5, important for protein stability stretch occupies residues 650–779; it reads PDSSLVRSLQ…RRKKKDPDSD (130 aa). Over residues 693 to 703 the composition is skewed to polar residues; that stretch reads SGDQSRLSGAS. Disordered stretches follow at residues 693–732 and 754–779; these read SGDQ…KELP and EWLT…PDSD. Ser725 carries the phosphoserine modification. A compositionally biased stretch (basic and acidic residues) spans 761–779; sequence EHSREKVGTRRKKKDPDSD.

This sequence belongs to the helicase family. Homodimer; in free form. Component of the mitochondrial degradosome (mtEXO) complex which is a heteropentamer containing 2 copies of SUPV3L1 and 3 copies of PNPT1. As part of mitochondrial degradosome complex, interacts with GRSF1 in a RNA-dependent manner; the interaction enhances the activity of the complex. Interacts with LAMTOR5/HBXIP, WRN and BLM. Mg(2+) is required as a cofactor. Requires Mn(2+) as cofactor.

Its subcellular location is the nucleus. It localises to the mitochondrion matrix. It is found in the mitochondrion nucleoid. The catalysed reaction is ATP + H2O = ADP + phosphate + H(+). With respect to regulation, helicase activity toward DNA substrate is inhibited by micromolar concentrations of 5,6-dichloro-1-(beta-D-ribofuranosyl)benzotriazole (DRBT) and 4,5,6,7-tetrabromobenzotriazole (TBBT). Helicase activity toward RNA substrate is inhibited by elevated concentrations of TBBT. Inhibited by some ring-expanded nucleoside analogs. Its function is as follows. Major helicase player in mitochondrial RNA metabolism. Component of the mitochondrial degradosome (mtEXO) complex, that degrades 3' overhang double-stranded RNA with a 3'-to-5' directionality in an ATP-dependent manner. Involved in the degradation of non-coding mitochondrial transcripts (MT-ncRNA) and tRNA-like molecules. ATPase and ATP-dependent multisubstrate helicase, able to unwind double-stranded (ds) DNA and RNA, and RNA/DNA heteroduplexes in the 5'-to-3' direction. Plays a role in the RNA surveillance system in mitochondria; regulates the stability of mature mRNAs, the removal of aberrantly formed mRNAs and the rapid degradation of non coding processing intermediates. Also implicated in recombination and chromatin maintenance pathways. May protect cells from apoptosis. Associates with mitochondrial DNA. This Mus musculus (Mouse) protein is ATP-dependent RNA helicase SUPV3L1, mitochondrial (Supv3l1).